We begin with the raw amino-acid sequence, 343 residues long: MDLIYIPEDLSSCPKFGNKSCPPTNRSFRVRMIMYLFMTGAMVITIFGNLVIIISISHFKQLHSPTNFLILSMATTDFLLGFVIMPYSMVRSVESCWYFGDSFCKFHASFDMMLSLTSIFHLCSIAIDRFYAVCDPLHYTTTMTVSMIKRLLAFCWAAPALFSFGLVLSEANVSGMQSYEILVACFNFCALTFNKFWGTILFTTCFFTPGSIMVGIYGKIFIVSRRHARALSDMPANTKGAVGKNLSKKKDRKAAKTLGIVMGVFLACWLPCFLAVLIDPYLDYSTPIIVLDLLVWLGYFNSTCNPLIHGFFYPWFRKALQFIVSGKIFRSNSDTANLFPEAH.

The Extracellular segment spans residues 1 to 35 (MDLIYIPEDLSSCPKFGNKSCPPTNRSFRVRMIMY). N-linked (GlcNAc...) asparagine glycosylation is found at Asn-18 and Asn-25. 2 disulfide bridges follow: Cys-21/Cys-185 and Cys-104/Cys-189. A helical membrane pass occupies residues 36–56 (LFMTGAMVITIFGNLVIIISI). Topologically, residues 57–68 (SHFKQLHSPTNF) are cytoplasmic. The chain crosses the membrane as a helical span at residues 69–89 (LILSMATTDFLLGFVIMPYSM). The Extracellular portion of the chain corresponds to 90–150 (VRSVESCWYF…TTMTVSMIKR (61 aa)). A helical transmembrane segment spans residues 151–168 (LLAFCWAAPALFSFGLVL). Residues 169–172 (SEAN) are Cytoplasmic-facing. The tract at residues 173 to 186 (VSGMQSYEILVACF) is extracellular Loop 2 (ECL2). A helical membrane pass occupies residues 173–193 (VSGMQSYEILVACFNFCALTF). Residues 194-198 (NKFWG) lie on the Extracellular side of the membrane. The chain crosses the membrane as a helical span at residues 199–223 (TILFTTCFFTPGSIMVGIYGKIFIV). Over 224 to 257 (SRRHARALSDMPANTKGAVGKNLSKKKDRKAAKT) the chain is Cytoplasmic. A helical membrane pass occupies residues 258–278 (LGIVMGVFLACWLPCFLAVLI). At 279–287 (DPYLDYSTP) the chain is on the extracellular side. Residues 288–308 (IIVLDLLVWLGYFNSTCNPLI) traverse the membrane as a helical segment. Residues 309-343 (HGFFYPWFRKALQFIVSGKIFRSNSDTANLFPEAH) lie on the Cytoplasmic side of the membrane.

It belongs to the G-protein coupled receptor 1 family. Specifically expressed in neurons of the olfactory epithelium.

The protein resides in the cell membrane. Olfactory receptor activated by several primary trace amines, including isoamylamine. Activated by isoamylamine and cyclohexylamine, but not to the corresponding alcohols, isoamylalcohol and cyclohexanol. This receptor is probably mediated by the G(s)-class of G-proteins which activate adenylate cyclase. This chain is Trace amine-associated receptor 3, found in Mus musculus (Mouse).